We begin with the raw amino-acid sequence, 122 residues long: Large ribosomal subunit protein uL24 (122 aa).

Positions 43 to 64 are disordered; it reads IRKHHRRDMPTPQGGTTKGGII.

The protein belongs to the universal ribosomal protein uL24 family. As to quaternary structure, part of the 50S ribosomal subunit.

In terms of biological role, one of two assembly initiator proteins, it binds directly to the 5'-end of the 23S rRNA, where it nucleates assembly of the 50S subunit. Its function is as follows. One of the proteins that surrounds the polypeptide exit tunnel on the outside of the subunit. In Cutibacterium acnes (strain DSM 16379 / KPA171202) (Propionibacterium acnes), this protein is Large ribosomal subunit protein uL24.